The sequence spans 69 residues: MKISLIEKKLIPSPPLEENTHVLMHSPLVFDSWLNSATALILVSFVLDENSILEIPKTLKYSNKISIPD.

This is an uncharacterized protein from Vaccinia virus (strain Copenhagen) (VACV).